A 475-amino-acid polypeptide reads, in one-letter code: Transmembrane protein 44 (475 aa).

At 1–29 (MGEAPSPAPALWDWDYLDRCFARHRVCIS) the chain is on the extracellular side. A helical transmembrane segment spans residues 30–50 (FGLWICASSCWIAAHALLLYL). The Cytoplasmic portion of the chain corresponds to 51–61 (RCAQKPRQDQS). A helical membrane pass occupies residues 62–82 (ALCAACCLLTSLCDTVGALLA). The Extracellular portion of the chain corresponds to 83–88 (RQLTIQ). The chain crosses the membrane as a helical span at residues 89–109 (VFTGAYLAAIDLVNFMFILFP). The Cytoplasmic portion of the chain corresponds to 110–135 (VCGSKFKSNSDREARERKRRRQLRAS). A helical membrane pass occupies residues 136 to 156 (VFALALPLSLGPCWALWVAVP). Over 157-179 (KASATIRGPQRRLLASLLQENTE) the chain is Extracellular. The chain crosses the membrane as a helical span at residues 180 to 200 (ILGYLLGSVAAFGSWASRIPP). Residues 201–259 (LSRIAPPPTLGITTQHEIWRGQMSKPSQSPSRSPSGHWRAAAQRQVLGTEMCRGKTFPS) lie on the Cytoplasmic side of the membrane. The chain crosses the membrane as a helical span at residues 260 to 280 (IHLWTRLLSALAGLLYASAIV). The Extracellular portion of the chain corresponds to 281–294 (AHDQHPEYLLRATP). The helical transmembrane segment at 295–315 (WFLTSLGRAALDLAIIFLSCV) threads the bilayer. The Cytoplasmic portion of the chain corresponds to 316 to 475 (MKSKMRQALG…VRTAHLSDDD (160 aa)). Positions 390 to 475 (SATRLPGDGQ…VRTAHLSDDD (86 aa)) are disordered. Residues 424–436 (SSGSSSEVSSINS) are compositionally biased toward low complexity. Residues 464 to 475 (DSVRTAHLSDDD) are compositionally biased toward basic and acidic residues. A Phosphoserine modification is found at Ser465.

It is found in the membrane. The chain is Transmembrane protein 44 (TMEM44) from Homo sapiens (Human).